Reading from the N-terminus, the 124-residue chain is Small ribosomal subunit protein bS6 (124 aa).

The interval Glu-96–Ala-124 is disordered. Residues Ala-115–Ala-124 are compositionally biased toward polar residues.

This sequence belongs to the bacterial ribosomal protein bS6 family.

Its function is as follows. Binds together with bS18 to 16S ribosomal RNA. This chain is Small ribosomal subunit protein bS6, found in Cupriavidus pinatubonensis (strain JMP 134 / LMG 1197) (Cupriavidus necator (strain JMP 134)).